Here is a 483-residue protein sequence, read N- to C-terminus: UDP-N-acetylmuramoyl-L-alanyl-D-glutamate--L-lysine ligase (483 aa).

A UDP-N-acetyl-alpha-D-muramoyl-L-alanyl-D-glutamate-binding site is contributed by Ser44. Position 120 to 126 (120 to 126 (GTKGKTT)) interacts with ATP. UDP-N-acetyl-alpha-D-muramoyl-L-alanyl-D-glutamate contacts are provided by residues 162–163 (TT), Ser189, and Arg197. Lys231 bears the N6-carboxylysine mark. An L-lysine recognition motif motif is present at residues 406–409 (DDPN).

The protein belongs to the MurCDEF family. MurE subfamily. Post-translationally, carboxylation is probably crucial for Mg(2+) binding and, consequently, for the gamma-phosphate positioning of ATP.

It is found in the cytoplasm. The catalysed reaction is UDP-N-acetyl-alpha-D-muramoyl-L-alanyl-D-glutamate + L-lysine + ATP = UDP-N-acetyl-alpha-D-muramoyl-L-alanyl-gamma-D-glutamyl-L-lysine + ADP + phosphate + H(+). Its pathway is cell wall biogenesis; peptidoglycan biosynthesis. Its function is as follows. Catalyzes the addition of L-lysine to the nucleotide precursor UDP-N-acetylmuramoyl-L-alanyl-D-glutamate (UMAG) in the biosynthesis of bacterial cell-wall peptidoglycan. In Streptococcus mutans serotype c (strain ATCC 700610 / UA159), this protein is UDP-N-acetylmuramoyl-L-alanyl-D-glutamate--L-lysine ligase.